We begin with the raw amino-acid sequence, 804 residues long: MLVSYNWLKDFLDLDEDPKDLGEKITRTGVEIASVDHPAEGLKKIVVGHILECEDIEGTHLHKCQVDVGEEEPIQIVCGAPNVAAGEDVIVALHGARIAGNEKIKRGKIRGIKSNGMICGLQEIGFEDKVVPAKYADGIFVFPKDADVKPGEEVYKALGMDDYILDFDITPNRADTLSMEGAAYEVGAIVDEKPKVEPVVLKEDGPDWTNELDVQVDEKLAPKFYLRKISNVKIGESPLWMQRRLWNAGIRPINNVVDVTNYVMLLTGQPMHAYDARTFKDGKLEVRKANKNEKLTLLNDKEVELDPNDIIITDGQKPVMMAGVMGGKNSEVEDDTTDVILESAVFDGTSVRKSALRHANRTEASSRFEKGVNWDNTQKALDMAALLLRNDADGTVNEGEIKATDAQRNPSVVKTTVSYINKVLGTELSRAEMEKIFDQLGFTVAGSEDELVVTIPNRRWDISIPADLVEEVGRIYGYDNLKSTQPLLAETHGGYSAKETAMRRIKDIVQGQGLMEAISYSLTSPEKAISFTKDPKPVVEVQWPLNSSRSTMRENLITGLVDAASYNMARKQKELALFEQGRVYDHENNTFNEHEHLAALYSGHTLAANWQHLDQKIDFYFVKGQLTNLFRAIGIKDEDVEYRAELVQGMHPTRTAGIYINDQYIGLIGMLAHAVTTLDKALRGSEIYVYEIDLDTIVSMLHKGMKAKAAPKFPAIERDLSLLVPNDVTNAQIEAQIKLNGGKYLYDIRVIDVYAGSQIESGHKSISYSLTFLNEKDTLTDEVVATAMEKIEADLKESLKIKVR.

The region spanning 39-155 (AEGLKKIVVG…ADVKPGEEVY (117 aa)) is the tRNA-binding domain. The 76-residue stretch at 408 to 483 (RNPSVVKTTV…RIYGYDNLKS (76 aa)) folds into the B5 domain. Mg(2+)-binding residues include Asp461, Asp467, Glu470, and Glu471. Residues 711–804 (PKFPAIERDL…LKESLKIKVR (94 aa)) form the FDX-ACB domain.

It belongs to the phenylalanyl-tRNA synthetase beta subunit family. Type 1 subfamily. As to quaternary structure, tetramer of two alpha and two beta subunits. Mg(2+) is required as a cofactor.

The protein localises to the cytoplasm. The catalysed reaction is tRNA(Phe) + L-phenylalanine + ATP = L-phenylalanyl-tRNA(Phe) + AMP + diphosphate + H(+). This chain is Phenylalanine--tRNA ligase beta subunit, found in Lactobacillus johnsonii (strain CNCM I-12250 / La1 / NCC 533).